The sequence spans 573 residues: MKKLSGAEMVVQSLRDEGVEYVFGYPGGAVLDIYDAIHTLGGIEHILVRHEQAAVHMADGYARSTGKVGCVLVTSGPGATNAITGILTAYTDSVPMVIISGQVMSNLIGSDAFQECDMLGISRPVVKHSFIVKKAEDIPSTLKKAFYIASTGRPGPVVVDIPKDTVNPNFKYPYEYPEYVELRSYNPTVNGHKGQIKKALKALLVAKKPILFVGGGAITAECSEQLIQFAQRLNLPVTSSLMGLGAYPSTDKQFLGMLGMHGTLEANTAMHESDLILGIGVRFDDRTTNNLEKYCPNAKVIHIDIDPTSISKNVPVAIPIVGNAKNVLEEFLGLLNEEGLKSQTDLESWWQEINQWKAKKCLEFDRTSGVIKPQQVVEAVYRLTKGQAYVASDVGQHQMFAALHYPFDEPRHWINSGGAGTMGFGFPAALGVKLAHPEGTVVCVTGDGSIQMNIQELSTATQYGIPVVIICLNNHFLGMVKQWQDLIYSGRHSQTYMNSLPDFAKLAESYGHVGIKIATPDELESKLQEAFSIKNKLVFVDINVDESEHVYPMQIRGGAMNEMILSKPQEETN.

E51 contacts thiamine diphosphate. Residues R153, 261–282 (HGTLEANTAMHESDLILGIGVR), and 304–323 (DIDPTSISKNVPVAIPIVGN) each bind FAD. A thiamine pyrophosphate binding region spans residues 396 to 476 (QHQMFAALHY…VVIICLNNHF (81 aa)). Mg(2+) is bound by residues D447 and N474.

It belongs to the TPP enzyme family. In terms of assembly, dimer of large and small chains. The cofactor is Mg(2+). It depends on thiamine diphosphate as a cofactor.

It catalyses the reaction 2 pyruvate + H(+) = (2S)-2-acetolactate + CO2. Its pathway is amino-acid biosynthesis; L-isoleucine biosynthesis; L-isoleucine from 2-oxobutanoate: step 1/4. The protein operates within amino-acid biosynthesis; L-valine biosynthesis; L-valine from pyruvate: step 1/4. In Haemophilus influenzae (strain ATCC 51907 / DSM 11121 / KW20 / Rd), this protein is Acetolactate synthase large subunit (ilvI).